Here is a 412-residue protein sequence, read N- to C-terminus: CCA-adding enzyme (412 aa).

S41 and K44 together coordinate ATP. Residues S41 and K44 each contribute to the CTP site. Positions 53, 55, and 106 each coordinate Mg(2+). The ATP site is built by H129, K149, and Y158. CTP contacts are provided by H129, K149, and Y158.

It belongs to the tRNA nucleotidyltransferase/poly(A) polymerase family. Archaeal CCA-adding enzyme subfamily. In terms of assembly, homodimer. Mg(2+) is required as a cofactor.

The enzyme catalyses a tRNA precursor + 2 CTP + ATP = a tRNA with a 3' CCA end + 3 diphosphate. The catalysed reaction is a tRNA with a 3' CCA end + 2 CTP + ATP = a tRNA with a 3' CCACCA end + 3 diphosphate. Catalyzes the addition and repair of the essential 3'-terminal CCA sequence in tRNAs without using a nucleic acid template. Adds these three nucleotides in the order of C, C, and A to the tRNA nucleotide-73, using CTP and ATP as substrates and producing inorganic pyrophosphate. tRNA 3'-terminal CCA addition is required both for tRNA processing and repair. Also involved in tRNA surveillance by mediating tandem CCA addition to generate a CCACCA at the 3' terminus of unstable tRNAs. While stable tRNAs receive only 3'-terminal CCA, unstable tRNAs are marked with CCACCA and rapidly degraded. This chain is CCA-adding enzyme, found in Saccharolobus islandicus (strain Y.N.15.51 / Yellowstone #2) (Sulfolobus islandicus).